Here is a 133-residue protein sequence, read N- to C-terminus: uncharacterized protein (133 aa).

Transmembrane regions (helical) follow at residues methionine 8 to leucine 28 and serine 46 to alanine 66.

It is found in the membrane. This is an uncharacterized protein from Saccharomyces cerevisiae (strain ATCC 204508 / S288c) (Baker's yeast).